The following is a 401-amino-acid chain: Argininosuccinate synthase (401 aa).

Residue 8–16 participates in ATP binding; it reads AYSGGLDTT. L-citrulline is bound at residue Tyr87. An ATP-binding site is contributed by Gly117. L-aspartate-binding residues include Thr119, Asn123, and Asp124. Asn123 serves as a coordination point for L-citrulline. 4 residues coordinate L-citrulline: Arg127, Ser175, Glu259, and Tyr271.

This sequence belongs to the argininosuccinate synthase family. Type 1 subfamily. As to quaternary structure, homotetramer.

Its subcellular location is the cytoplasm. It carries out the reaction L-citrulline + L-aspartate + ATP = 2-(N(omega)-L-arginino)succinate + AMP + diphosphate + H(+). The protein operates within amino-acid biosynthesis; L-arginine biosynthesis; L-arginine from L-ornithine and carbamoyl phosphate: step 2/3. The polypeptide is Argininosuccinate synthase (Corynebacterium glutamicum (strain ATCC 13032 / DSM 20300 / JCM 1318 / BCRC 11384 / CCUG 27702 / LMG 3730 / NBRC 12168 / NCIMB 10025 / NRRL B-2784 / 534)).